The primary structure comprises 98 residues: MSSYLTIIISFFYLGILGILLNRLHLLSILLCFELLLISLFIWICNTLFKTFNNLILSNNLILLTLSACEASAGLSLMVALSRTHNSDLVSSMNILQQ.

3 consecutive transmembrane segments (helical) span residues 1–21, 24–44, and 61–81; these read MSSY…GILL, LHLL…FIWI, and LILL…MVAL.

The protein belongs to the complex I subunit 4L family.

It localises to the mitochondrion membrane. It catalyses the reaction a ubiquinone + NADH + 5 H(+)(in) = a ubiquinol + NAD(+) + 4 H(+)(out). In terms of biological role, core subunit of the mitochondrial membrane respiratory chain NADH dehydrogenase (Complex I) that is believed to belong to the minimal assembly required for catalysis. Complex I functions in the transfer of electrons from NADH to the respiratory chain. The immediate electron acceptor for the enzyme is believed to be ubiquinone. This Pisaster ochraceus (Ochre sea star) protein is NADH-ubiquinone oxidoreductase chain 4L (ND4L).